A 462-amino-acid chain; its full sequence is MSLCTLEINLSAIKNNYLLLQDICKTSLVGAAVKANGYGLGAVQISKALIEENCRHFFVASSEEGVNLRKALASWHESVFRHCEKNYTVIRRSNPVKNSVSQNFFNYFSGLQQCFAPRNDGSSIHATTPKALDNDVNILVLNGVFEHDALELIEYNLTPVLNNLKQIEIWQKFSNLKNRLLPCYLHFNTGINRLGLTHNEIEQLINNRDLLKGLDLQYIISHLAVSEEIDNPYNLEQLNRFKTYLQYFPNVKASLANSGGIFLGQDYHFDLARPGAALYGLNPVIDLSNNLSYKEEFEGDTERRTAAYINVREDSSTGSTYKLPLEGGYSRGLQNPVTLKAPIIHLQNLTLDSHIGYNMTFTTERDSVIATLPLGYADGFSRNFSNQGEVFINGRSVPIVGRISMDLINIDVTDLPPLDIFLGQEAEIIGNYCTPDKIASIIGTIGYEVLTSLGSRYKRIYK.

The active-site Proton acceptor; specific for D-alanine is the lysine 34. N6-(pyridoxal phosphate)lysine is present on lysine 34. Residues 73–132 (ASWHESVFRHCEKNYTVIRRSNPVKNSVSQNFFNYFSGLQQCFAPRNDGSSIHATTPKAL) are unknown insert. Residue arginine 193 coordinates substrate. An RPE1 insert domain is found at 286–332 (DLSNNLSYKEEFEGDTERRTAAYINVREDSSTGSTYKLPLEGGYSRG). Tyrosine 357 acts as the Proton acceptor; specific for L-alanine in catalysis. Residue methionine 405 participates in substrate binding.

Belongs to the alanine racemase family. Requires pyridoxal 5'-phosphate as cofactor.

The catalysed reaction is L-alanine = D-alanine. It functions in the pathway amino-acid biosynthesis; D-alanine biosynthesis; D-alanine from L-alanine: step 1/1. Catalyzes the interconversion of L-alanine and D-alanine. May also act on other amino acids. This is Alanine racemase (alr) from Rickettsia felis (strain ATCC VR-1525 / URRWXCal2) (Rickettsia azadi).